Reading from the N-terminus, the 116-residue chain is Acyl-CoA-binding protein homolog 3 (116 aa).

An ACB domain is found at 3-92 (LQEKFDAAVE…LNDMFDKIAE (90 aa)). An acyl-CoA contacts are provided by residues 34–38 (YSLFK), Lys60, and Tyr79.

The protein belongs to the ACBP family.

Its function is as follows. Binds medium- and long-chain acyl-CoA esters with very high affinity and may function as an intracellular carrier of acyl-CoA esters. In Caenorhabditis elegans, this protein is Acyl-CoA-binding protein homolog 3 (acbp-3).